A 339-amino-acid chain; its full sequence is Putative zinc metalloprotease CA_C1796 (339 aa).

Residue His20 coordinates Zn(2+). The active site involves Glu21. His24 provides a ligand contact to Zn(2+). The next 3 helical transmembrane spans lie at 91 to 113 (LSIV…CIVG), 275 to 297 (QLGV…LFLF), and 310 to 330 (VGFV…VVTI). One can recognise a PDZ domain in the interval 99-177 (IMNLILAAVL…GIKLALKNNG (79 aa)).

Belongs to the peptidase M50B family. Zn(2+) is required as a cofactor.

It is found in the cell membrane. This chain is Putative zinc metalloprotease CA_C1796, found in Clostridium acetobutylicum (strain ATCC 824 / DSM 792 / JCM 1419 / IAM 19013 / LMG 5710 / NBRC 13948 / NRRL B-527 / VKM B-1787 / 2291 / W).